Here is a 441-residue protein sequence, read N- to C-terminus: Ribosomal protein uS12 methylthiotransferase RimO (441 aa).

An MTTase N-terminal domain is found at 7 to 117 (PKISFVSLGC…VLEAVHRAKP (111 aa)). [4Fe-4S] cluster contacts are provided by Cys16, Cys52, Cys81, Cys148, Cys152, and Cys155. The Radical SAM core domain maps to 134–371 (LTPRHYAYLK…MARQQVISAR (238 aa)). The TRAM domain maps to 374 to 440 (KRKVGTRQQI…AYDLHGTVAG (67 aa)).

The protein belongs to the methylthiotransferase family. RimO subfamily. [4Fe-4S] cluster serves as cofactor.

The protein resides in the cytoplasm. The catalysed reaction is L-aspartate(89)-[ribosomal protein uS12]-hydrogen + (sulfur carrier)-SH + AH2 + 2 S-adenosyl-L-methionine = 3-methylsulfanyl-L-aspartate(89)-[ribosomal protein uS12]-hydrogen + (sulfur carrier)-H + 5'-deoxyadenosine + L-methionine + A + S-adenosyl-L-homocysteine + 2 H(+). Catalyzes the methylthiolation of an aspartic acid residue of ribosomal protein uS12. This Rhodopseudomonas palustris (strain BisB5) protein is Ribosomal protein uS12 methylthiotransferase RimO.